The primary structure comprises 185 residues: Dual specificity protein phosphatase 3 (185 aa).

The Tyrosine-protein phosphatase domain maps to 28-179 (QPCNEVVPRV…LCQLNDRLAK (152 aa)). C124 serves as the catalytic Phosphocysteine intermediate.

It belongs to the protein-tyrosine phosphatase family. Non-receptor class dual specificity subfamily. Microtubule inner protein component of sperm flagellar doublet microtubules. Interacts with VRK3; this interaction activates DUSP3 phosphatase activity.

Its subcellular location is the nucleus. The protein resides in the cytoplasm. It is found in the cytoskeleton. It localises to the flagellum axoneme. The enzyme catalyses O-phospho-L-tyrosyl-[protein] + H2O = L-tyrosyl-[protein] + phosphate. The catalysed reaction is O-phospho-L-seryl-[protein] + H2O = L-seryl-[protein] + phosphate. It carries out the reaction O-phospho-L-threonyl-[protein] + H2O = L-threonyl-[protein] + phosphate. Functionally, shows activity both for tyrosine-protein phosphate and serine-protein phosphate, but displays a strong preference toward phosphotyrosines. Specifically dephosphorylates and inactivates ERK1 and ERK2. The chain is Dual specificity protein phosphatase 3 (Dusp3) from Mus musculus (Mouse).